Reading from the N-terminus, the 684-residue chain is Glycine--tRNA ligase beta subunit (684 aa).

It belongs to the class-II aminoacyl-tRNA synthetase family. As to quaternary structure, tetramer of two alpha and two beta subunits.

Its subcellular location is the cytoplasm. The enzyme catalyses tRNA(Gly) + glycine + ATP = glycyl-tRNA(Gly) + AMP + diphosphate. The polypeptide is Glycine--tRNA ligase beta subunit (Pseudomonas putida (strain ATCC 47054 / DSM 6125 / CFBP 8728 / NCIMB 11950 / KT2440)).